We begin with the raw amino-acid sequence, 151 residues long: 3-dehydroquinate dehydratase (151 aa).

The active-site Proton acceptor is the tyrosine 26. Positions 75, 81, and 88 each coordinate substrate. The Proton donor role is filled by histidine 101. Substrate contacts are provided by residues 102-103 and arginine 112; that span reads LS.

This sequence belongs to the type-II 3-dehydroquinase family. Homododecamer.

The catalysed reaction is 3-dehydroquinate = 3-dehydroshikimate + H2O. Its pathway is metabolic intermediate biosynthesis; chorismate biosynthesis; chorismate from D-erythrose 4-phosphate and phosphoenolpyruvate: step 3/7. Catalyzes a trans-dehydration via an enolate intermediate. The polypeptide is 3-dehydroquinate dehydratase (Shewanella halifaxensis (strain HAW-EB4)).